The sequence spans 296 residues: Acetaldehyde dehydrogenase (296 aa).

15–18 (SGNI) serves as a coordination point for NAD(+). Cysteine 132 serves as the catalytic Acyl-thioester intermediate. NAD(+) contacts are provided by residues 164–172 (SAGPATRAN) and asparagine 274.

This sequence belongs to the acetaldehyde dehydrogenase family. As to quaternary structure, interacts with MhpE.

The catalysed reaction is acetaldehyde + NAD(+) + CoA = acetyl-CoA + NADH + H(+). The protein operates within aromatic compound metabolism; 3-phenylpropanoate degradation. In terms of biological role, catalyzes the conversion of acetaldehyde to acetyl-CoA, using NAD(+) and coenzyme A. Is the final enzyme in the meta-cleavage pathway for the degradation of aromatic compounds. The chain is Acetaldehyde dehydrogenase from Pectobacterium atrosepticum (strain SCRI 1043 / ATCC BAA-672) (Erwinia carotovora subsp. atroseptica).